A 644-amino-acid chain; its full sequence is Keratin, type II cytoskeletal 1 (644 aa).

Positions 2–179 (SRQFSSRSGY…DPEIQKVKSR (178 aa)) are head. At arginine 12 the chain carries Omega-N-methylarginine. A phosphoserine mark is found at serine 18 and serine 21. The segment covering 22-38 (AGIINYQRRTTSSSTRR) has biased composition (low complexity). The disordered stretch occupies residues 22–47 (AGIINYQRRTTSSSTRRSGGGGGRFS). At arginine 45 the chain carries Omega-N-methylarginine. The residue at position 66 (serine 66) is a Phosphoserine. The residue at position 82 (arginine 82) is an Omega-N-methylarginine. Residues 180–215 (EREQIKSLNNQFASFIDKVRFLEQQNQVLQTKWELL) form a coil 1A region. The IF rod domain maps to 180 to 493 (EREQIKSLNN…TLLEGEESRM (314 aa)). A linker 1 region spans residues 216 to 234 (QQVDTSTRTHNLEPYFESF). The segment at 235–326 (INNLRRRVDQ…ALYQAELSQM (92 aa)) is coil 1B. Lysine 276 carries the post-translational modification N6,N6-dimethyllysine. Residues 327 to 350 (QTQISETNVILSMDNNRSLDLDSI) form a linker 12 region. Serine 344 is subject to Phosphoserine. The coil 2 stretch occupies residues 351-489 (IAEVKAQYED…ATYRTLLEGE (139 aa)). Disordered stretches follow at residues 489–523 (EESRMSGECAPNVSVSVSTSHTTISGGGSRGGGGG) and 568–644 (SGGG…GVTR). Residues 490–644 (ESRMSGECAP…VSTTYSGVTR (155 aa)) are tail. Positions 501–511 (VSVSVSTSHTT) are enriched in low complexity. Composition is skewed to gly residues over residues 513–523 (SGGGSRGGGGG) and 568–620 (SGGG…GSSS). Omega-N-methylarginine occurs at positions 518 and 588. Residues 621–631 (GGVKSSGGSSS) show a composition bias toward low complexity. The span at 632–644 (VKFVSTTYSGVTR) shows a compositional bias: polar residues.

This sequence belongs to the intermediate filament family. In terms of assembly, heterotetramer of two type I and two type II keratins. Heterodimer with KRT10. Two heterodimers of KRT1 and KRT10 form a heterotetramer. Forms a heterodimer with KRT14; the interaction is more abundant in the absence of KRT5. Interacts with PLEC isoform 1C, when in a heterodimer with KRT10. Interacts with ITGB1 in the presence of RACK1 and SRC, and with RACK1. Interacts with C1QBP; the association represents a cell surface kininogen receptor. Interacts with EPPK1; interaction is dependent of higher-order structure of intermediate filament. In terms of processing, undergoes deimination of some arginine residues (citrullination). As to expression, the source of this protein is neonatal foreskin. The 67-kDa type II keratins are expressed in terminally differentiating epidermis.

It is found in the cell membrane. The protein localises to the cytoplasm. Its function is as follows. May regulate the activity of kinases such as PKC and SRC via binding to integrin beta-1 (ITB1) and the receptor of activated protein C kinase 1 (RACK1). In complex with C1QBP is a high affinity receptor for kininogen-1/HMWK. The protein is Keratin, type II cytoskeletal 1 (KRT1) of Homo sapiens (Human).